Consider the following 406-residue polypeptide: Peptide chain release factor PrfB3, chloroplastic (406 aa).

It belongs to the prokaryotic/mitochondrial release factor family. In terms of assembly, interacts with PDE338.

The protein resides in the plastid. Its subcellular location is the chloroplast stroma. It is found in the chloroplast. Its function is as follows. Involved in the light- and stress-dependent regulation of stability of 3' processed petB transcripts, thus regulating cytochrome b6 accumulation, a rate-limiting step in photosynthetic electron transport. May be recruited to specifically protect petB transcripts against 3'-5' exonucleolytic attack by masking the 3' ends. Does not function as release factor. This chain is Peptide chain release factor PrfB3, chloroplastic, found in Arabidopsis thaliana (Mouse-ear cress).